The sequence spans 112 residues: Large ribosomal subunit protein bL17 (112 aa).

The protein belongs to the bacterial ribosomal protein bL17 family. As to quaternary structure, part of the 50S ribosomal subunit. Contacts protein L32.

This chain is Large ribosomal subunit protein bL17, found in Thermoanaerobacter pseudethanolicus (strain ATCC 33223 / 39E) (Clostridium thermohydrosulfuricum).